Consider the following 255-residue polypeptide: uncharacterized protein (255 aa).

Positions 4-59 constitute an HTH deoR-type domain; it reads RNERLNLIRKRVDQYGQVAVKDLAIFLQVTPETVRKDLETLENDKLITRTHGGAIQ. Positions 21-40 form a DNA-binding region, H-T-H motif; the sequence is VAVKDLAIFLQVTPETVRKD.

This is an uncharacterized protein from Staphylococcus epidermidis (strain ATCC 12228 / FDA PCI 1200).